The primary structure comprises 874 residues: Valine--tRNA ligase (874 aa).

The disordered stretch occupies residues 1 to 22 (MTENSQQPQPAPSTELPTQYTP). Residues 57-67 (PNVTGSLHLGH) carry the 'HIGH' region motif. A 'KMSKS' region motif is present at residues 531–535 (KMSKS). Lysine 534 contributes to the ATP binding site. The stretch at 805-871 (VIDFAAERKR…TRITAQLEKL (67 aa)) forms a coiled coil.

Belongs to the class-I aminoacyl-tRNA synthetase family. ValS type 1 subfamily. In terms of assembly, monomer.

It localises to the cytoplasm. The enzyme catalyses tRNA(Val) + L-valine + ATP = L-valyl-tRNA(Val) + AMP + diphosphate. Catalyzes the attachment of valine to tRNA(Val). As ValRS can inadvertently accommodate and process structurally similar amino acids such as threonine, to avoid such errors, it has a 'posttransfer' editing activity that hydrolyzes mischarged Thr-tRNA(Val) in a tRNA-dependent manner. The chain is Valine--tRNA ligase from Streptomyces coelicolor (strain ATCC BAA-471 / A3(2) / M145).